We begin with the raw amino-acid sequence, 128 residues long: Glycophorin-C (128 aa).

A compositionally biased stretch (polar residues) spans 1 to 12 (MWSTRSPNSTAW). A disordered region spans residues 1-48 (MWSTRSPNSTAWPLSLEPDPGMASASTTMHTTTIAEPDPGMSGWPDGR). Residues 1 to 57 (MWSTRSPNSTAWPLSLEPDPGMASASTTMHTTTIAEPDPGMSGWPDGRMETSTPTIM) are Extracellular-facing. An O-linked (GalNAc...) serine glycan is attached at S3. T4 is a glycosylation site (O-linked (GalNAc...) threonine). O-linked (GalNAc...) serine glycosylation is present at S6. N-linked (GlcNAc...) asparagine glycosylation occurs at N8. S9 is a glycosylation site (O-linked (GalNAc...) serine). O-linked (GalNAc...) threonine glycosylation occurs at T10. S15, S24, and S26 each carry an O-linked (GalNAc...) serine glycan. Positions 22-33 (MASASTTMHTTT) are enriched in low complexity. Residues T27, T28, T31, T32, and T33 are each glycosylated (O-linked (GalNAc...) threonine). Residue S42 is glycosylated (O-linked (GalNAc...) serine). A helical; Signal-anchor for type III membrane protein membrane pass occupies residues 58 to 81 (DIVVIAGVIAAVAIVLVSLLFVML). Residues 82-128 (RYMYRHKGTYHTNEAKGTEFAESADAALQGDPALQDAGDSSRKEYFI) lie on the Cytoplasmic side of the membrane. Phosphoserine occurs at positions 104 and 122. A disordered region spans residues 108-128 (ALQGDPALQDAGDSSRKEYFI).

This sequence belongs to the glycophorin-C family. In terms of processing, O-glycosylated with core 1 or possibly core 8 glycans. As to expression, glycophorin-C is expressed in erythrocytes. Glycophorin-D and IsoGPC are ubiquitously expressed.

The protein resides in the cell membrane. In terms of biological role, this protein is a minor sialoglycoprotein in human erythrocyte membranes. The blood group Gerbich antigens and receptors for Plasmodium falciparum merozoites are most likely located within the extracellular domain. Glycophorin-C plays an important role in regulating the stability of red cells. This is Glycophorin-C (GYPC) from Homo sapiens (Human).